Here is a 121-residue protein sequence, read N- to C-terminus: Large ribosomal subunit protein uL14 (121 aa).

Belongs to the universal ribosomal protein uL14 family. In terms of assembly, part of the 50S ribosomal subunit. Forms a cluster with proteins L3 and L19. In the 70S ribosome, L14 and L19 interact and together make contacts with the 16S rRNA in bridges B5 and B8.

Its function is as follows. Binds to 23S rRNA. Forms part of two intersubunit bridges in the 70S ribosome. The polypeptide is Large ribosomal subunit protein uL14 (Prochlorococcus marinus (strain NATL1A)).